Reading from the N-terminus, the 24-residue chain is Waglerin-3 (24 aa).

The span at 1-10 shows a compositional bias: basic and acidic residues; sequence SLGGKPDLRP. The segment at 1–24 is disordered; the sequence is SLGGKPDLRPCHPPCHYIPRPKPR. The cysteines at positions 11 and 15 are disulfide-linked.

Belongs to the waglerin family. Waglerin-1 is monomeric. In terms of processing, amidation of the waglerin-1 C-terminus increases the affinity by 2-fold. Expressed by the venom gland.

The protein resides in the secreted. Waglerin-1 selectively blocks the epsilon subunit of muscle nicotinic acetylcholine receptor (nAChR). Also has effects on rodent ionotropic GABA(A) receptors (GABR), since it potentiates I(GABA) in some neurons and depresses I(GABA) in others. In mice, it elicits tachypnea, ocular proptosis, rapid collapse and spasms, whereas no toxic effects on respiration and blood pressure are observed in rats. Functionally, waglerin-3 selectively blocks the epsilon subunit of muscle nicotinic acetylcholine receptor (nAChR). It elicits tachypnea, ocular proptosis, rapid collapse and spasms in mice. It causes death by respiratory failure. The sequence is that of Waglerin-3 from Tropidolaemus wagleri (Wagler's pit viper).